A 98-amino-acid polypeptide reads, in one-letter code: Large ribosomal subunit protein uL23 (98 aa).

Belongs to the universal ribosomal protein uL23 family. As to quaternary structure, part of the 50S ribosomal subunit. Contacts protein L29, and trigger factor when it is bound to the ribosome.

Its function is as follows. One of the early assembly proteins it binds 23S rRNA. One of the proteins that surrounds the polypeptide exit tunnel on the outside of the ribosome. Forms the main docking site for trigger factor binding to the ribosome. The protein is Large ribosomal subunit protein uL23 of Lactobacillus delbrueckii subsp. bulgaricus (strain ATCC 11842 / DSM 20081 / BCRC 10696 / JCM 1002 / NBRC 13953 / NCIMB 11778 / NCTC 12712 / WDCM 00102 / Lb 14).